We begin with the raw amino-acid sequence, 305 residues long: ADP,ATP carrier protein (305 aa).

3 Solcar repeats span residues 8–101, 112–204, and 212–298; these read SNFA…IKAM, KWFA…LKPL, and NSFL…LQVI. A run of 5 helical transmembrane segments spans residues 10–37, 78–102, 110–130, 180–201, and 215–235; these read FAID…VKLL, TANV…KAMF, YAKW…LSLL, FLPS…YDSL, and LASF…SYPL. Residues arginine 83 and lysine 95 each coordinate ADP. Arginine 239 lines the ADP pocket. The interval 239–244 is important for transport activity; it reads RRRMMM. Residues 239 to 244 carry the Nucleotide carrier signature motif motif; it reads RRRMMM. The chain crosses the membrane as a helical span at residues 275–295; the sequence is CGANILRGVAGAGVISMYDQL.

Belongs to the mitochondrial carrier (TC 2.A.29) family. In terms of assembly, monomer.

The protein localises to the mitochondrion inner membrane. The enzyme catalyses ADP(in) + ATP(out) = ADP(out) + ATP(in). The matrix-open state (m-state) is inhibited by the membrane-permeable bongkrekic acid (BKA). The cytoplasmic-open state (c-state) is inhibited by the membrane-impermeable toxic inhibitor carboxyatractyloside (CATR). Its function is as follows. ADP:ATP antiporter that mediates import of ADP into the mitochondrial matrix for ATP synthesis, and export of ATP out to fuel the cell. Cycles between the cytoplasmic-open state (c-state) and the matrix-open state (m-state): operates by the alternating access mechanism with a single substrate-binding site intermittently exposed to either the cytosolic (c-state) or matrix (m-state) side of the inner mitochondrial membrane. The polypeptide is ADP,ATP carrier protein (AAC) (Kluyveromyces lactis (strain ATCC 8585 / CBS 2359 / DSM 70799 / NBRC 1267 / NRRL Y-1140 / WM37) (Yeast)).